The following is a 103-amino-acid chain: Large ribosomal subunit protein bL21 (103 aa).

Belongs to the bacterial ribosomal protein bL21 family. As to quaternary structure, part of the 50S ribosomal subunit. Contacts protein L20.

Its function is as follows. This protein binds to 23S rRNA in the presence of protein L20. This is Large ribosomal subunit protein bL21 from Lactobacillus johnsonii (strain CNCM I-12250 / La1 / NCC 533).